The primary structure comprises 444 residues: D(2) dopamine receptor (444 aa).

Residues 1-37 (MDPLNLSWYDDDLERQNWSRPFNGSEGKPDRPHYNYY) lie on the Extracellular side of the membrane. Residues Asn-5, Asn-17, and Asn-23 are each glycosylated (N-linked (GlcNAc...) asparagine). A helical membrane pass occupies residues 38–60 (AMLLTLLIFIIVFGNVLVCMAVS). Residues 61 to 70 (REKALQTTTN) are Cytoplasmic-facing. Residues 71–93 (YLIVSLAVADLLVATLVMPWVVY) form a helical membrane-spanning segment. The Extracellular portion of the chain corresponds to 94-108 (LEVVGEWKFSRIHCD). A disulfide bridge links Cys-107 with Cys-182. The chain crosses the membrane as a helical span at residues 109 to 130 (IFVTLDVMMCTASILNLCAISI). Residues 131-151 (DRYTAVAMPMLYNTRYSSKRR) are Cytoplasmic-facing. Residues 152–172 (VTVMIAIVWVLSFTISCPLLF) form a helical membrane-spanning segment. The Extracellular portion of the chain corresponds to 173–188 (GLNNTDQNECIIANPA). Residues 189–213 (FVVYSSIVSFYVPFIVTLLVYIKIY) form a helical membrane-spanning segment. The segment at 211–374 (KIYIVLRKRR…SQQKEKKATQ (164 aa)) is interaction with PPP1R9B. Topologically, residues 214–374 (IVLRKRRKRV…SQQKEKKATQ (161 aa)) are cytoplasmic. Positions 282 to 329 (EMLSSTSPPERTRYSPIPPSHHQLTLPDPSHHGLHSNPDSPAKPEKNG) are disordered. A helical transmembrane segment spans residues 375-396 (MLAIVLGVFIICWLPFFITHIL). The Extracellular segment spans residues 397–410 (NIHCDCNIPPVLYS). Cys-400 and Cys-402 are disulfide-bonded. Residues 411 to 432 (AFTWLGYVNSAVNPIIYTTFNI) traverse the membrane as a helical segment. Residues 433 to 444 (EFRKAFMKILHC) lie on the Cytoplasmic side of the membrane. A lipid anchor (S-palmitoyl cysteine) is attached at Cys-444.

It belongs to the G-protein coupled receptor 1 family. Forms homo- and heterooligomers with DRD4. The interaction with DRD4 may modulate agonist-induced downstream signaling. Interacts with CADPS and CADPS2. Interacts with GPRASP1, PPP1R9B and CLIC6. Interacts with ARRB2. Interacts with HTR2A. Interacts with DRD1. As to quaternary structure, interacts with KCNA2. In terms of processing, palmitoylated. Palmitoylation which is required for proper localization to the plasma membrane and stability of the receptor could be carried on by ZDHHC4, ZDHHC3 and ZDHHC8. As to expression, expressed in retinal hyaloid vessels at postnatal day 6. Expressed in the pituitary gland, stratum, brain stem and cortex. In terms of tissue distribution, expressed in the brain stem.

The protein resides in the cell membrane. The protein localises to the golgi apparatus membrane. Dopamine receptor whose activity is mediated by G proteins which inhibit adenylyl cyclase. Positively regulates postnatal regression of retinal hyaloid vessels via suppression of VEGFR2/KDR activity, downstream of OPN5. The sequence is that of D(2) dopamine receptor (Drd2) from Mus musculus (Mouse).